A 351-amino-acid polypeptide reads, in one-letter code: AA9 family lytic polysaccharide monooxygenase A (351 aa).

A signal peptide spans Met1 to Ala20. His21 and His107 together coordinate Cu(2+). Residues Cys76 and Cys196 are joined by a disulfide bond. Positions 182 and 191 each coordinate O2. Tyr193 is a Cu(2+) binding site. Residues Gly315–Ile351 form the CBM1 domain.

This sequence belongs to the polysaccharide monooxygenase AA9 family. It depends on Cu(2+) as a cofactor.

It is found in the secreted. The enzyme catalyses [(1-&gt;4)-beta-D-glucosyl]n+m + reduced acceptor + O2 = 4-dehydro-beta-D-glucosyl-[(1-&gt;4)-beta-D-glucosyl]n-1 + [(1-&gt;4)-beta-D-glucosyl]m + acceptor + H2O.. Functionally, lytic polysaccharide monooxygenase (LPMO) that depolymerizes crystalline and amorphous polysaccharides via the oxidation of scissile alpha- or beta-(1-4)-glycosidic bonds, yielding C1 and C4 oxidation products. Catalysis by LPMOs requires the reduction of the active-site copper from Cu(II) to Cu(I) by a reducing agent and H(2)O(2) or O(2) as a cosubstrate. This is AA9 family lytic polysaccharide monooxygenase A from Podospora anserina (strain S / ATCC MYA-4624 / DSM 980 / FGSC 10383) (Pleurage anserina).